The following is a 502-amino-acid chain: Neuronal acetylcholine receptor subunit alpha-7 (502 aa).

The first 22 residues, 1 to 22 (MCGGRGGIWLALAAALLHVSLQ), serve as a signal peptide directing secretion. The Extracellular segment spans residues 23-233 (GEFQRRLYKE…VTMRRRTLYY (211 aa)). Residues R42 and V44 each contribute to the Ca(2+) site. N-linked (GlcNAc...) asparagine glycosylation is found at N46, N90, and N133. C150 and C164 are disulfide-bonded. The Ca(2+) site is built by S172 and Y210. A disulfide bridge connects residues C212 and C213. Transmembrane regions (helical) follow at residues 234-254 (GLNL…VFLL), 262-282 (ISLG…VAEI), and 295-315 (QYFA…VIVL). Residues 260-267 (EKISLGIT) form an essential for TMEM35A/NACHO-mediated proper subunit assembly and trafficking to cell membrane region. Topologically, residues 316–469 (RYHHHDPDGG…WKFAACVVDR (154 aa)) are cytoplasmic. Residues 470–490 (LCLMAFSVFTIICTIGILMSA) traverse the membrane as a helical segment.

It belongs to the ligand-gated ion channel (TC 1.A.9) family. Acetylcholine receptor (TC 1.A.9.1) subfamily. Alpha-7/CHRNA7 sub-subfamily. As to quaternary structure, homopentamer. Can also form heteropentamers with CHRNB2, mainly found in basal forebrain cholinergic neurons. Interacts with RIC3; which is required for proper folding and assembly. Interacts with LYPD6. Interacts with CANX. In terms of processing, glycosylations at Asn-46, Asn-90 and Asn-133 are essential for TMEM35A/NACHO-mediated proper subunit assembly and trafficking to the cell membrane. In terms of tissue distribution, expressed in neurons. Expressed in umbrella cells of urothelium (at protein level).

The protein resides in the postsynaptic cell membrane. It localises to the cell membrane. The catalysed reaction is Ca(2+)(in) = Ca(2+)(out). It catalyses the reaction K(+)(in) = K(+)(out). The enzyme catalyses Na(+)(in) = Na(+)(out). It carries out the reaction choline(out) = choline(in). The catalysed reaction is NH4(+)(in) = NH4(+)(out). It catalyses the reaction L-arginine(in) = L-arginine(out). The enzyme catalyses guanidine(out) = guanidine(in). Its activity is regulated as follows. Activated by a myriad of ligands such as acetylcholine, cytisine, nicotine, choline and epibatidine. Oligomeric amyloid-beta protein 42 activates specifially CHRNA7:CHRNB2 nAchRs. Activity is modulated by positive allosteric modulators (PAMs), such as flavonoids, with a wide range of chemical diversity, pharmacological sensitivity and efficacy. AChR activity is inhibited by the antagonists alpha-conotoxons RgIA, ImI and ImII, small disulfide-constrained peptides from cone snails. Alpha-conotoxin PnIC selectively inhibits CHRNA7:CHRNB2 over CHRNA7 homopentamer. Its function is as follows. Component of neuronal acetylcholine receptors (nAChRs) that function as pentameric, ligand-gated cation channels with high calcium permeability among other activities. nAChRs are excitatory neurotrasnmitter receptors formed by a collection of nAChR subunits known to mediate synaptic transmission in the nervous system and the neuromuscular junction. Each nAchR subunit confers differential attributes to channel properties, including activation, deactivation and desensitization kinetics, pH sensitivity, cation permeability, and binding to allosteric modulators. CHRNA7 forms homopentameric neuronal acetylcholine receptors abundantly expressed in the central nervous system, characterized by fast desensitization and high calcium permeability. Also forms heteropentamers with CHRNB2, mainly expressed in basal forebrain cholinergic neurons. Involved in the modulation of calcium-dependent signaling pathways and influences the release of neurotransmitters, including dopamine, glutamate and GABA. Also expressed in non-neuronal cells such as immune cells like lymphocytes, monocytes and macrophages. In T cells, activation induces metabotropic signaling that results in an increase of intracellular Ca2+ concentrations, independent of ionotropic receptor functions. In macrophages, required for acetylcholine-mediated inhibition of TNF and other inflammatory cytokine release. Once activated by acetylcholine, nicotine or other agonists, selectively inhibits production of pro-inflammatory cytokines while leaving anti-inflammatory cytokines undisturbed. Stimulates the cholinergic anti-inflammatory pathway, controlling inflammation by inhibiting NFKB nuclear translocation and activating the JAK2-STAT3 pathway, independently of ion channel activity. Also expressed in the urothelium where it modulates reflex bladder activity by increasing intracellular calcium through internal stores and decreasing basal ATP release. The sequence is that of Neuronal acetylcholine receptor subunit alpha-7 (Chrna7) from Rattus norvegicus (Rat).